A 347-amino-acid polypeptide reads, in one-letter code: Protein RecA (347 aa).

65–72 (GPESSGKT) serves as a coordination point for ATP. Basic and acidic residues predominate over residues 327–336 (KFEPTELSRE). The interval 327–347 (KFEPTELSREEGDEDTLEDAM) is disordered. Acidic residues predominate over residues 337–347 (EGDEDTLEDAM).

This sequence belongs to the RecA family.

The protein resides in the cytoplasm. Its function is as follows. Can catalyze the hydrolysis of ATP in the presence of single-stranded DNA, the ATP-dependent uptake of single-stranded DNA by duplex DNA, and the ATP-dependent hybridization of homologous single-stranded DNAs. It interacts with LexA causing its activation and leading to its autocatalytic cleavage. The protein is Protein RecA of Xylella fastidiosa (strain M12).